The chain runs to 489 residues: DNA-directed RNA polymerase subunit beta' C-terminal section (489 aa).

Residues D208, D210, and D212 each contribute to the Mg(2+) site.

The protein belongs to the RNA polymerase beta' chain family. RpoC1 subfamily. In plastids the minimal PEP RNA polymerase catalytic core is composed of four subunits: alpha, beta, beta', and beta''. When a (nuclear-encoded) sigma factor is associated with the core the holoenzyme is formed, which can initiate transcription. Mg(2+) serves as cofactor.

It is found in the plastid. The protein localises to the chloroplast. The enzyme catalyses RNA(n) + a ribonucleoside 5'-triphosphate = RNA(n+1) + diphosphate. Functionally, DNA-dependent RNA polymerase catalyzes the transcription of DNA into RNA using the four ribonucleoside triphosphates as substrates. The polypeptide is DNA-directed RNA polymerase subunit beta' C-terminal section (rpoC1B) (Chlamydomonas reinhardtii (Chlamydomonas smithii)).